Reading from the N-terminus, the 211-residue chain is MDDKQWERFLVPYRQAVEELKVKLKGIRTLYEYEDDHSPIEFVTGRVKPVASILEKARRKSIPLHEIETMQDIAGLRIMCQFVDDIQIVKEMLFARKDFTVVDQRDYIAEHKESGYRSYHLVVLYPLQTVSGEKHVLVEIQIRTLAMNFWATIEHSLNYKYSGNIPEKVKLRLQRASEAASRLDEEMSEIRGEVQEAQAAFSRKKKGSEQQ.

Residues 21–28 (KVKLKGIR), 41–42 (EF), and 46–48 (RVK) each bind guanosine 3'-diphosphate 5'-triphosphate. Residues 46–48 (RVK), S52, 56–59 (KARR), D72, and R77 each bind ATP. Residue R59 participates in guanosine 3'-diphosphate 5'-triphosphate binding. D72 lines the Mg(2+) pocket. Guanosine 3'-diphosphate 5'-triphosphate contacts are provided by residues R105, 112-114 (KES), and H120. The Proton acceptor role is filled by E139. Guanosine 3'-diphosphate 5'-triphosphate-binding positions include N148 and 151–155 (ATIEH).

The protein belongs to the RelA/SpoT family. As to quaternary structure, homotetramer.

The enzyme catalyses GTP + ATP = guanosine 3'-diphosphate 5'-triphosphate + AMP. The catalysed reaction is GDP + ATP = guanosine 3',5'-bis(diphosphate) + AMP. It participates in purine metabolism; ppGpp biosynthesis; ppGpp from GTP: step 1/2. With respect to regulation, allosterically regulated by its own products; pppGpp simulates synthesis 10-fold more than ppGpp. 2 pppGpp molecules bind in a regulatory cleft in the middle of the tetramer in an asymmetric manner. There is a specific contact of Lys-25 to the gamma-phosphate of pppGpp, explaining why pppGpp stimulates activity but ppGpp does not. Its function is as follows. Functions as a (p)ppGpp synthase; GDP can be used instead of GTP, resulting in an increase of (p)ppGpp synthesis. The enzyme binds ATP, then GDP or GTP and catalysis is highly cooperative. In eubacteria ppGpp (guanosine 3'-diphosphate 5'-diphosphate) is a mediator of the stringent response that coordinates a variety of cellular activities in response to changes in nutritional abundance. Probably has a minor role in the stringent response. This chain is GTP pyrophosphokinase YjbM (yjbM), found in Bacillus subtilis (strain 168).